We begin with the raw amino-acid sequence, 429 residues long: Glutamate-1-semialdehyde 2,1-aminomutase 2 (429 aa).

K268 is modified (N6-(pyridoxal phosphate)lysine).

The protein belongs to the class-III pyridoxal-phosphate-dependent aminotransferase family. HemL subfamily. In terms of assembly, homodimer. It depends on pyridoxal 5'-phosphate as a cofactor.

It is found in the cytoplasm. It catalyses the reaction (S)-4-amino-5-oxopentanoate = 5-aminolevulinate. Its pathway is porphyrin-containing compound metabolism; protoporphyrin-IX biosynthesis; 5-aminolevulinate from L-glutamyl-tRNA(Glu): step 2/2. This Geobacillus thermodenitrificans (strain NG80-2) protein is Glutamate-1-semialdehyde 2,1-aminomutase 2.